We begin with the raw amino-acid sequence, 244 residues long: Extracellular superoxide dismutase [Cu-Zn] (244 aa).

Residues 1-15 (MVAFLFCNLLLVACG) form the signal peptide. Cystine bridges form between Cys-70–Cys-215 and Cys-132–Cys-214. N-linked (GlcNAc...) asparagine glycosylation is present at Asn-114. The Cu cation site is built by His-121, His-123, and His-138. Zn(2+)-binding residues include His-138, His-146, His-149, and Asp-152. His-188 contributes to the Cu cation binding site. Residues 224-244 (AWESQTKERKKRRRESECKTT) are disordered.

Belongs to the Cu-Zn superoxide dismutase family. Homodimer. Interacts with ATP7A; this interaction is copper-dependent and is required for SOD3 activity. The cofactor is Cu cation. It depends on Zn(2+) as a cofactor.

It localises to the secreted. The protein localises to the extracellular space. The protein resides in the golgi apparatus. It is found in the trans-Golgi network. The enzyme catalyses 2 superoxide + 2 H(+) = H2O2 + O2. Functionally, protect the extracellular space from toxic effect of reactive oxygen intermediates by converting superoxide radicals into hydrogen peroxide and oxygen. This chain is Extracellular superoxide dismutase [Cu-Zn] (Sod3), found in Rattus norvegicus (Rat).